The chain runs to 50 residues: Protein PsbN (50 aa).

The chain crosses the membrane as a helical span at residues 14 to 34 (IAVTILALLLALTGFGLWTAF).

This sequence belongs to the PsbN family.

Its subcellular location is the cellular thylakoid membrane. In terms of biological role, may play a role in photosystem I and II biogenesis. The sequence is that of Protein PsbN from Prochlorococcus marinus (strain MIT 9301).